The chain runs to 481 residues: Zinc metalloproteinase/disintegrin (481 aa).

Positions 1–20 (MIQVLLVTICLAVFPYQGSS) are cleaved as a signal peptide. A propeptide spanning residues 21–190 (IILESGNVDD…KASQLYLTPE (170 aa)) is cleaved from the precursor. In terms of domain architecture, Peptidase M12B spans 197–392 (RHIELAIVVD…KKPQCILNAP (196 aa)). Ca(2+) contacts are provided by Glu-200 and Asp-284. Disulfide bonds link Cys-308/Cys-387, Cys-349/Cys-371, and Cys-351/Cys-354. His-333 serves as a coordination point for Zn(2+). Glu-334 is an active-site residue. Zn(2+) is bound by residues His-337 and His-343. Residues Cys-387 and Asn-390 each contribute to the Ca(2+) site. The propeptide occupies 393–410 (LRTDTVSTPISGNEFLEA). Residues 400 to 481 (TPISGNEFLE…ADCPRNGLYG (82 aa)) form the Disintegrin domain. Intrachain disulfides connect Cys-414–Cys-429, Cys-416–Cys-424, Cys-423–Cys-446, Cys-437–Cys-443, Cys-442–Cys-467, and Cys-455–Cys-474. The Cell attachment site motif lies at 459–461 (RGD).

Belongs to the venom metalloproteinase (M12B) family. P-II subfamily. P-IIa sub-subfamily. Monomer. It depends on Zn(2+) as a cofactor. In terms of tissue distribution, expressed by the venom gland.

Its subcellular location is the secreted. In terms of biological role, impairs hemostasis in the envenomed animal. Functionally, inhibits platelet aggregation induced by ADP and collagen. Acts by inhibiting fibrinogen interaction with platelet receptors GPIIb/GPIIIa (ITGA2B/ITGB3). Has antitumor-growth activity. This is Zinc metalloproteinase/disintegrin from Protobothrops jerdonii (Jerdon's pitviper).